An 81-amino-acid polypeptide reads, in one-letter code: Photosystem I iron-sulfur center (81 aa).

4Fe-4S ferredoxin-type domains are found at residues 2–31 and 39–68; these read AHIV…MVPW and MASA…VRVY. The [4Fe-4S] cluster site is built by C11, C14, C17, C21, C48, C51, C54, and C58.

The eukaryotic PSI reaction center is composed of at least 11 subunits. Requires [4Fe-4S] cluster as cofactor.

It is found in the plastid. The protein resides in the chloroplast thylakoid membrane. The enzyme catalyses reduced [plastocyanin] + hnu + oxidized [2Fe-2S]-[ferredoxin] = oxidized [plastocyanin] + reduced [2Fe-2S]-[ferredoxin]. Functionally, apoprotein for the two 4Fe-4S centers FA and FB of photosystem I (PSI); essential for photochemical activity. FB is the terminal electron acceptor of PSI, donating electrons to ferredoxin. The C-terminus interacts with PsaA/B/D and helps assemble the protein into the PSI complex. Required for binding of PsaD and PsaE to PSI. PSI is a plastocyanin/cytochrome c6-ferredoxin oxidoreductase, converting photonic excitation into a charge separation, which transfers an electron from the donor P700 chlorophyll pair to the spectroscopically characterized acceptors A0, A1, FX, FA and FB in turn. This is Photosystem I iron-sulfur center from Chlamydomonas reinhardtii (Chlamydomonas smithii).